The sequence spans 418 residues: NADH-quinone oxidoreductase subunit H (418 aa).

9 helical membrane-spanning segments follow: residues 15 to 35, 83 to 103, 123 to 143, 164 to 184, 197 to 217, 262 to 282, 287 to 307, 321 to 341, and 349 to 369; these read LVLG…LVAI, FVYF…FAFI, LPVA…GIVL, VISY…YAGS, VWFV…MVGE, LATA…MWAG, WWPV…YFWL, GLGW…AAVI, and YAHW…ALVL. Residues 394 to 418 are disordered; the sequence is AAHRAGFHPGIPDTAAAGESAGGRE.

Belongs to the complex I subunit 1 family. NDH-1 is composed of 14 different subunits. Subunits NuoA, H, J, K, L, M, N constitute the membrane sector of the complex.

Its subcellular location is the cell membrane. It catalyses the reaction a quinone + NADH + 5 H(+)(in) = a quinol + NAD(+) + 4 H(+)(out). Its function is as follows. NDH-1 shuttles electrons from NADH, via FMN and iron-sulfur (Fe-S) centers, to quinones in the respiratory chain. The immediate electron acceptor for the enzyme in this species is believed to be menaquinone. Couples the redox reaction to proton translocation (for every two electrons transferred, four hydrogen ions are translocated across the cytoplasmic membrane), and thus conserves the redox energy in a proton gradient. This subunit may bind ubiquinone. This Mycobacterium avium (strain 104) protein is NADH-quinone oxidoreductase subunit H.